Here is a 329-residue protein sequence, read N- to C-terminus: 4-hydroxythreonine-4-phosphate dehydrogenase (329 aa).

Substrate-binding residues include H136 and T137. Residues H166, H211, and H266 each contribute to the a divalent metal cation site. Residues K274, N283, and R292 each contribute to the substrate site.

It belongs to the PdxA family. In terms of assembly, homodimer. Zn(2+) is required as a cofactor. Mg(2+) serves as cofactor. It depends on Co(2+) as a cofactor.

Its subcellular location is the cytoplasm. The enzyme catalyses 4-(phosphooxy)-L-threonine + NAD(+) = 3-amino-2-oxopropyl phosphate + CO2 + NADH. Its pathway is cofactor biosynthesis; pyridoxine 5'-phosphate biosynthesis; pyridoxine 5'-phosphate from D-erythrose 4-phosphate: step 4/5. Catalyzes the NAD(P)-dependent oxidation of 4-(phosphooxy)-L-threonine (HTP) into 2-amino-3-oxo-4-(phosphooxy)butyric acid which spontaneously decarboxylates to form 3-amino-2-oxopropyl phosphate (AHAP). The polypeptide is 4-hydroxythreonine-4-phosphate dehydrogenase (Escherichia coli O6:H1 (strain CFT073 / ATCC 700928 / UPEC)).